The sequence spans 233 residues: Large ribosomal subunit protein uL1 (233 aa).

This sequence belongs to the universal ribosomal protein uL1 family. As to quaternary structure, part of the 50S ribosomal subunit.

Its function is as follows. Binds directly to 23S rRNA. The L1 stalk is quite mobile in the ribosome, and is involved in E site tRNA release. In terms of biological role, protein L1 is also a translational repressor protein, it controls the translation of the L11 operon by binding to its mRNA. The polypeptide is Large ribosomal subunit protein uL1 (Marinomonas sp. (strain MWYL1)).